The following is a 1070-amino-acid chain: MPKRDDIKTILVIGSGPIVIGQAAEFDYAGTQACLSLKEEGYRVVLVNSNPATIMTDAEMADKVYIEPITLDFVSRIIRKERPDAILPTLGGQTGLNMAMELSAAGILDECNVEVLGTDLTAIKKAEDREAFRDLMNELGEPVPESDIIHNLDEAYSFVERIGYPVIVRPAYTLGGSGGGICHNEQELIETVTSGLKLSPVTQCLLEKSIAGFKEVEYEVMRDANNNAMVVCNMENIDPVGIHTGDSIVVAPSQTLSDREYQLLRDVSLKIIRALEIEGGCNVQLALDPDSYNYYVIEVNPRVSRSSALASKATGYPIAKLAAKIAVGLTLDEVRNPVTGTTFAHFEPTLDYVVAKIPRFAFDKFEQADRRLGTQMKATGEVMAIGRSWEEALLKAVRSLEVGADHLLLEEAENADEETLERKICFPEDDRLFFLAAALRRGQTIEQLHEKTKIDLFFLYKLSKSIELENRVKENPQNEAILAEAKRAGFSDAFLATCWNIDEQAIYDLRKAQNLFPVYKMVDTCAAEFESTTPYFYSTYEEENESTRSAKESVIVLGSGPIRIGQGVEFDYATVHSVWAIQQAGYEAIIINNNPETVSTDFSISDKLYFEPLTLEDVMHVIEIEQPLGVVVQFGGQTAINLADGLAKRGVKILGTSLEDTDRAENRDAFEKALEILQIPQPAGKTATSVEEAIKVATDIGYPVLVRPSYVLGGRAMEIVESEEALKHYMTNAVKVNPKHPVLVDRYVSGQEVEVDAISDGENVLIPGIMEHIERAGVHSGDSIAVYPAQRLSQQVKNTIVDYTTRLATGLNIIGMLNIQYVVDGEEVFVIEVNPRSSRTAPFLSKITEIPMANVATRVILGENLIDLGYTPGLAPEKQEIFVKVPVFSFAKLRSVDTSLGPEMKSTGEVMGKDVTLEKALYKGFVASGTTMHDYGTVLLTVADRDKKEAVELAKRFNRIGFTIMATKGTASTLEEAEIPVSQVKKIGENQETLIDYIRNGQVTLVVNTLTTGKRPERDGFQIRRESVENGIPVCTSLDTAEAILRVLESRSFELESMNASEVKQPKVRV.

Residues 1–401 (MPKRDDIKTI…ALLKAVRSLE (401 aa)) are carboxyphosphate synthetic domain. Residues Arg129, Arg169, Gly175, Gly176, Lys208, Ile210, Glu215, Gly241, Ile242, His243, Gln284, and Glu298 each coordinate ATP. The ATP-grasp 1 domain occupies 133–327 (RDLMNELGEP…IAKLAAKIAV (195 aa)). Mg(2+)-binding residues include Gln284, Glu298, and Asn300. Residues Gln284, Glu298, and Asn300 each contribute to the Mn(2+) site. The segment at 402-546 (VGADHLLLEE…YSTYEEENES (145 aa)) is oligomerization domain. Residues 547-929 (TRSAKESVIV…ALYKGFVASG (383 aa)) form a carbamoyl phosphate synthetic domain region. The 191-residue stretch at 671–861 (EKALEILQIP…MANVATRVIL (191 aa)) folds into the ATP-grasp 2 domain. Arg707, Arg746, Val748, Glu752, Gly777, Val778, His779, Ser780, Gln820, and Glu832 together coordinate ATP. Gln820, Glu832, and Asn834 together coordinate Mg(2+). 3 residues coordinate Mn(2+): Gln820, Glu832, and Asn834. An MGS-like domain is found at 930–1070 (TTMHDYGTVL…SEVKQPKVRV (141 aa)). Residues 930–1070 (TTMHDYGTVL…SEVKQPKVRV (141 aa)) form an allosteric domain region.

The protein belongs to the CarB family. As to quaternary structure, composed of two chains; the small (or glutamine) chain promotes the hydrolysis of glutamine to ammonia, which is used by the large (or ammonia) chain to synthesize carbamoyl phosphate. Tetramer of heterodimers (alpha,beta)4. Mg(2+) is required as a cofactor. Requires Mn(2+) as cofactor.

It catalyses the reaction hydrogencarbonate + L-glutamine + 2 ATP + H2O = carbamoyl phosphate + L-glutamate + 2 ADP + phosphate + 2 H(+). The catalysed reaction is hydrogencarbonate + NH4(+) + 2 ATP = carbamoyl phosphate + 2 ADP + phosphate + 2 H(+). The protein operates within amino-acid biosynthesis; L-arginine biosynthesis; carbamoyl phosphate from bicarbonate: step 1/1. It participates in pyrimidine metabolism; UMP biosynthesis via de novo pathway; (S)-dihydroorotate from bicarbonate: step 1/3. In terms of biological role, large subunit of the glutamine-dependent carbamoyl phosphate synthetase (CPSase). CPSase catalyzes the formation of carbamoyl phosphate from the ammonia moiety of glutamine, carbonate, and phosphate donated by ATP, constituting the first step of 2 biosynthetic pathways, one leading to arginine and/or urea and the other to pyrimidine nucleotides. The large subunit (synthetase) binds the substrates ammonia (free or transferred from glutamine from the small subunit), hydrogencarbonate and ATP and carries out an ATP-coupled ligase reaction, activating hydrogencarbonate by forming carboxy phosphate which reacts with ammonia to form carbamoyl phosphate. In Listeria welshimeri serovar 6b (strain ATCC 35897 / DSM 20650 / CCUG 15529 / CIP 8149 / NCTC 11857 / SLCC 5334 / V8), this protein is Carbamoyl phosphate synthase large chain.